Reading from the N-terminus, the 297-residue chain is uncharacterized protein (297 aa).

This is an uncharacterized protein from Frog virus 3 (isolate Goorha) (FV-3).